The chain runs to 1199 residues: Metabotropic glutamate receptor 1 (1199 aa).

Positions 1–20 (MVRLLLIFFPMIFLEMSILP) are cleaved as a signal peptide. Residues 21-592 (RMPDRKVLLA…IRYLEWSDIE (572 aa)) are Extracellular-facing. Cysteine 67 and cysteine 109 are joined by a disulfide. Residue tyrosine 74 coordinates L-glutamate. Asparagine 98 carries N-linked (GlcNAc...) asparagine glycosylation. L-glutamate is bound by residues serine 165 and 186-188 (SAT). Residue asparagine 223 is glycosylated (N-linked (GlcNAc...) asparagine). Tyrosine 236 is a binding site for L-glutamate. Cysteine 289 and cysteine 291 are joined by a disulfide. Aspartate 318 is a binding site for L-glutamate. Residues cysteine 378 and cysteine 394 are joined by a disulfide bond. N-linked (GlcNAc...) asparagine glycosylation occurs at asparagine 397. Lysine 409 lines the L-glutamate pocket. The cysteines at positions 432 and 439 are disulfide-linked. Residue asparagine 515 is glycosylated (N-linked (GlcNAc...) asparagine). A helical transmembrane segment spans residues 593–615 (SIIAIAFSCLGILVTLFVTLIFV). The Cytoplasmic segment spans residues 616–629 (LYRDTPVVKSSSRE). The helical transmembrane segment at 630–650 (LCYIILAGIFLGYVCPFTLIA) threads the bilayer. The Extracellular portion of the chain corresponds to 651-658 (KPTTTSCY). Cysteine 657 and cysteine 746 are oxidised to a cystine. The helical transmembrane segment at 659 to 680 (LQRLLVGLSSAMCYSALVTKTN) threads the bilayer. At 681–703 (RIARILAGSKKKICTRKPRFMSA) the chain is on the cytoplasmic side. Residues 704–727 (WAQVIIASILISVQLTLVVTLIIM) traverse the membrane as a helical segment. Topologically, residues 728-750 (EPPMPILSYPSIKEVYLICNTSN) are extracellular. Asparagine 747 carries an N-linked (GlcNAc...) asparagine glycan. Residues 751-772 (LGVVAPVGYNGLLIMSCTYYAF) traverse the membrane as a helical segment. Over 773–785 (KTRNVPANFNEAK) the chain is Cytoplasmic. Residues 786–807 (YIAFTMYTTCIIWLAFVPIYFG) traverse the membrane as a helical segment. The Extracellular portion of the chain corresponds to 808-815 (SNYKIITT). A helical transmembrane segment spans residues 816-840 (CFAVSLSVTVALGCMFTPKMYIIIA). The Cytoplasmic portion of the chain corresponds to 841-1199 (KPERNVRSAF…RDYKQSSSTL (359 aa)). A Phosphoserine modification is found at serine 853. Phosphothreonine is present on threonine 871. 3 disordered regions span residues 882–906 (GAGN…APKG), 959–1035 (EEDN…QPKS), and 1055–1082 (HAVL…QHLQ). A compositionally biased stretch (polar residues) spans 885 to 895 (NANSNGKSVSW). 2 positions are modified to phosphoserine: serine 894 and serine 969. Pro residues predominate over residues 1012-1032 (GLPPPLPQQQQQPPPQPPPQQ). A Phosphoserine modification is found at serine 1097. Positions 1118–1177 (VYEREGNTEEDDLEEEEDLPAASKLTPEDSPALTPPSPFRDSVASGSSVPSSPVSESVLC) are disordered. Positions 1125–1136 (TEEDDLEEEEDL) are enriched in acidic residues. The residue at position 1147 (serine 1147) is a Phosphoserine. At threonine 1151 the chain carries Phosphothreonine. The residue at position 1154 (serine 1154) is a Phosphoserine. The segment covering 1159 to 1175 (SVASGSSVPSSPVSESV) has biased composition (low complexity).

It belongs to the G-protein coupled receptor 3 family. Homodimer; disulfide-linked. The PPXXF motif binds HOMER1, HOMER2 and HOMER3. Interacts with TAMALIN. Interacts with RYR1, RYR2, ITPR1, SHANK1 and SHANK3. Interacts with SHIA1. In terms of tissue distribution, expressed in the striatum (at protein level). Expressed in type II unipolar brush cells of the cerebellum (at protein level).

The protein resides in the cell membrane. The protein localises to the postsynaptic cell membrane. It is found in the cell projection. It localises to the dendrite. G-protein coupled receptor for glutamate. Ligand binding causes a conformation change that triggers signaling via guanine nucleotide-binding proteins (G proteins) and modulates the activity of down-stream effectors. Signaling activates a phosphatidylinositol-calcium second messenger system. May participate in the central action of glutamate in the CNS, such as long-term potentiation in the hippocampus and long-term depression in the cerebellum (By. similarity). May function in the light response in the retina. Induces GRID1 and GRID2 cation-channel activation via GNAQ-PLC-PKC pathway in dopaminergic neurons and cerebellar Purkinje cell, respectively. The polypeptide is Metabotropic glutamate receptor 1 (Grm1) (Mus musculus (Mouse)).